A 214-amino-acid polypeptide reads, in one-letter code: Protein DMP6 (214 aa).

4 consecutive transmembrane segments (helical) span residues 52-72 (LANLLPTGTVLAFQILSPICT), 83-103 (FMTALLVSICGFSCFILSFTD), 143-163 (FIDFVHAIMSFLVFGAVVLFD), and 178-198 (VVELLTTLPVAVGVFCSMVFA).

This sequence belongs to the plant DMP1 protein family. Expressed constitutively in leaves, stems, flowers, siliques and roots (e.g. root hairs).

It is found in the vacuole membrane. Functionally, involved in membrane remodeling. The chain is Protein DMP6 from Arabidopsis thaliana (Mouse-ear cress).